Here is an 89-residue protein sequence, read N- to C-terminus: DNA/RNA-binding protein Alba 1 (89 aa).

The protein belongs to the histone-like Alba family.

It localises to the cytoplasm. It is found in the chromosome. Functionally, binds double-stranded DNA tightly but without sequence specificity. Involved in DNA compaction. This Archaeoglobus fulgidus (strain ATCC 49558 / DSM 4304 / JCM 9628 / NBRC 100126 / VC-16) protein is DNA/RNA-binding protein Alba 1.